Consider the following 203-residue polypeptide: Transmembrane emp24 domain-containing protein (203 aa).

The N-terminal stretch at 1–22 is a signal peptide; it reads MASIRLLPSCIVLMFLARSSLC. At 23–170 the chain is on the lumenal side; it reads YFITIDAHGE…RSINDNTNSR (148 aa). The region spanning 32-114 is the GOLD domain; that stretch reads EECFHDKVTS…PKVLKFSMDI (83 aa). A helical transmembrane segment spans residues 171–191; that stretch reads VVWWSFFESLVLVAMTLGQVY. Over 192–203 the chain is Cytoplasmic; the sequence is YLKRFFEVRRVV.

This sequence belongs to the EMP24/GP25L family.

The protein resides in the cytoplasmic vesicle membrane. Its function is as follows. Could have a role in the budding of coatomer-coated and other species of coated vesicles. This Nematostella vectensis (Starlet sea anemone) protein is Transmembrane emp24 domain-containing protein.